The following is a 355-amino-acid chain: uncharacterized protein (355 aa).

This sequence belongs to the ycf89 family.

The protein resides in the plastid. The protein localises to the chloroplast. This is an uncharacterized protein from Trieres chinensis (Marine centric diatom).